A 502-amino-acid polypeptide reads, in one-letter code: Glutamate--tRNA ligase (502 aa).

The short motif at 9 to 19 (PSPTGFPHVGT) is the 'HIGH' region element. Residues 250 to 254 (KLSKR) carry the 'KMSKS' region motif. Lysine 253 is an ATP binding site.

It belongs to the class-I aminoacyl-tRNA synthetase family. Glutamate--tRNA ligase type 1 subfamily. Monomer.

It localises to the cytoplasm. It catalyses the reaction tRNA(Glu) + L-glutamate + ATP = L-glutamyl-tRNA(Glu) + AMP + diphosphate. Its function is as follows. Catalyzes the attachment of glutamate to tRNA(Glu) in a two-step reaction: glutamate is first activated by ATP to form Glu-AMP and then transferred to the acceptor end of tRNA(Glu). This is Glutamate--tRNA ligase from Acinetobacter baumannii (strain SDF).